The primary structure comprises 518 residues: Glutamate--cysteine ligase (518 aa).

It belongs to the glutamate--cysteine ligase type 1 family. Type 1 subfamily.

It catalyses the reaction L-cysteine + L-glutamate + ATP = gamma-L-glutamyl-L-cysteine + ADP + phosphate + H(+). It participates in sulfur metabolism; glutathione biosynthesis; glutathione from L-cysteine and L-glutamate: step 1/2. The protein is Glutamate--cysteine ligase of Escherichia coli O7:K1 (strain IAI39 / ExPEC).